Here is a 185-residue protein sequence, read N- to C-terminus: Lectin B4 (185 aa).

A glycan (N-linked (GlcNAc...) asparagine) is linked at Asn-48. 2 residues coordinate Mn(2+): Glu-111 and Asp-113. Residues Asp-113, Tyr-115, Asn-117, and Asp-120 each contribute to the Ca(2+) site. Asp-120 provides a ligand contact to Mn(2+). N-linked (GlcNAc...) asparagine glycosylation is present at Asn-122. Position 125 (His-125) interacts with Mn(2+).

Belongs to the leguminous lectin family. Homo- or heterotetramer. V.villosa isolectins are composed of either two subunits a and two subunits B (A2B2), four subunits A (A4), or four subunits B (B4). The predominant form, isolectin B4, has no A1 erythrocyte agglutinating activity.

N-acetyl-D-galactosamine specific lectin. Binds the Tn determinant (GalNAc-alpha-O-Ser/Thr) of the tumor-associated glycopeptide. Could be required for agglutinating cells such as Tn-exposed erythrocytes. This Vicia villosa (Hairy vetch) protein is Lectin B4.